A 143-amino-acid polypeptide reads, in one-letter code: Beta/delta-urticatoxin-Uf2a (143 aa).

An N-terminal signal peptide occupies residues 1 to 18; it reads MGAIVLVALMALVASSSA. The propeptide occupies 19 to 80; that stretch reads FSDIEHNIMK…MMLSGRPQPN (62 aa). 6 disulfide bridges follow: Cys-83–Cys-100, Cys-90–Cys-105, Cys-99–Cys-113, Cys-115–Cys-129, Cys-122–Cys-134, and Cys-128–Cys-142.

This sequence belongs to the urticatoxin-2 family. In terms of tissue distribution, expressed in trichomes, that are stiff epidermal hairs located on the surface of petioles and leaves.

The protein localises to the secreted. Functionally, plant defense neurotoxin that causes pain and systemic symptoms in mammals via modulation of voltage-gated sodium channels (Nav). Potent modulator of human Nav1.5/SCN5A (EC(50)=55 nM), Nav1.6/SCN8A (EC(50)=0.86 nM), and Nav1.7/SCN9A (EC(50)=208 nM), where it shifts the activation threshold to more negative potentials and delays fast inactivation. Also shifts the voltage-dependence of steady-state fast inactivation of Nav1.6/SCN8A, but not that of Nav1.5/SCN5A or Nav1.7/SCN9A. On Nav1.7/SCN9A, principally acts by binding to extracellular loops of domain IV (Nav site 3). Does not affect current response of the tetrodotoxin (TTX)-resistant Nav1.8/SCN10A sodium channel. In vivo, intraplantar injection into mice causes numerous dose-dependent, immediate, and long-lasting spontaneous pain behaviors, while no swelling is observed in the injected paw. At the highest doses tested, systemic symptoms including hypokinesia and hypersalivation are observed. The sequence is that of Beta/delta-urticatoxin-Uf2a from Urtica ferox (Tree nettle).